A 323-amino-acid chain; its full sequence is Methionyl-tRNA formyltransferase (323 aa).

121–124 (SLLP) is a (6S)-5,6,7,8-tetrahydrofolate binding site.

This sequence belongs to the Fmt family.

The enzyme catalyses L-methionyl-tRNA(fMet) + (6R)-10-formyltetrahydrofolate = N-formyl-L-methionyl-tRNA(fMet) + (6S)-5,6,7,8-tetrahydrofolate + H(+). Functionally, attaches a formyl group to the free amino group of methionyl-tRNA(fMet). The formyl group appears to play a dual role in the initiator identity of N-formylmethionyl-tRNA by promoting its recognition by IF2 and preventing the misappropriation of this tRNA by the elongation apparatus. The chain is Methionyl-tRNA formyltransferase from Desulfotalea psychrophila (strain LSv54 / DSM 12343).